A 71-amino-acid chain; its full sequence is DNA-directed RNA polymerase subunit omega (71 aa).

Belongs to the RNA polymerase subunit omega family. As to quaternary structure, the RNAP catalytic core consists of 2 alpha, 1 beta, 1 beta' and 1 omega subunit. When a sigma factor is associated with the core the holoenzyme is formed, which can initiate transcription.

It carries out the reaction RNA(n) + a ribonucleoside 5'-triphosphate = RNA(n+1) + diphosphate. Functionally, promotes RNA polymerase assembly. Latches the N- and C-terminal regions of the beta' subunit thereby facilitating its interaction with the beta and alpha subunits. This is DNA-directed RNA polymerase subunit omega from Aromatoleum aromaticum (strain DSM 19018 / LMG 30748 / EbN1) (Azoarcus sp. (strain EbN1)).